The following is a 270-amino-acid chain: Phosphatidylglycerol--prolipoprotein diacylglyceryl transferase (270 aa).

7 helical membrane passes run 10–30 (VAVA…LVGI), 56–76 (LIFW…VLFY), 92–112 (WKGG…AWWF), 120–140 (FFQL…AGRI), 175–195 (SQLY…NLYA), 202–222 (MAVS…VEFV), and 237–257 (VTMG…LIWL). Residue Arg-139 participates in a 1,2-diacyl-sn-glycero-3-phospho-(1'-sn-glycerol) binding.

The protein belongs to the Lgt family.

Its subcellular location is the cell inner membrane. The catalysed reaction is L-cysteinyl-[prolipoprotein] + a 1,2-diacyl-sn-glycero-3-phospho-(1'-sn-glycerol) = an S-1,2-diacyl-sn-glyceryl-L-cysteinyl-[prolipoprotein] + sn-glycerol 1-phosphate + H(+). It functions in the pathway protein modification; lipoprotein biosynthesis (diacylglyceryl transfer). Functionally, catalyzes the transfer of the diacylglyceryl group from phosphatidylglycerol to the sulfhydryl group of the N-terminal cysteine of a prolipoprotein, the first step in the formation of mature lipoproteins. The chain is Phosphatidylglycerol--prolipoprotein diacylglyceryl transferase from Pseudomonas savastanoi pv. phaseolicola (strain 1448A / Race 6) (Pseudomonas syringae pv. phaseolicola (strain 1448A / Race 6)).